The sequence spans 674 residues: Xaa-Pro aminopeptidase 2 (674 aa).

Residues 1 to 22 form the signal peptide; the sequence is MAQAYWQCYPWLVLLCACAWSY. N65 carries an N-linked (GlcNAc...) asparagine glycan. Residue R116 coordinates substrate. Residues N270, N278, and N293 are each glycosylated (N-linked (GlcNAc...) asparagine). Substrate is bound at residue H430. D450, D461, and H524 together coordinate Zn(2+). H524, H533, and E555 together coordinate substrate. 2 residues coordinate Zn(2+): E555 and E569. A650 carries GPI-anchor amidated alanine lipidation. A propeptide spans 651–674 (removed in mature form); that stretch reads RAPHIISWTSLWVASALAILSWSS.

It belongs to the peptidase M24B family. As to quaternary structure, homotrimer. Zn(2+) is required as a cofactor. In terms of processing, N-glycosylated. In terms of tissue distribution, strongly expressed in small intestine, heart and lung. Also detected in testis, skeletal muscle, spleen, liver, kidney, brain, uterus, eye, lymph node, thymus, stomach, prostate and bone marrow.

It localises to the cell membrane. It carries out the reaction Release of any N-terminal amino acid, including proline, that is linked to proline, even from a dipeptide or tripeptide.. Its function is as follows. Membrane-bound metalloprotease which catalyzes the removal of a penultimate prolyl residue from the N-termini of peptides, such as Arg-Pro-Pro. May play a role in the metabolism of the vasodilator bradykinin. The protein is Xaa-Pro aminopeptidase 2 of Mus musculus (Mouse).